Consider the following 154-residue polypeptide: Plastocyanin, chloroplastic (154 aa).

The N-terminal 57 residues, 1 to 57 (MAALSSAAVTIPSMAPSAPGRRRMRSSLVVRASLGKAAGAAAVAVAASAMLAGGAMA), are a transit peptide targeting the chloroplast. Residues 58–154 (QEVLLGANGG…AGMVGKVTVN (97 aa)) form the Plastocyanin-like domain. Positions 94, 139, 142, and 147 each coordinate Cu cation.

Belongs to the plastocyanin family. The cofactor is Cu(2+).

The protein resides in the plastid. Its subcellular location is the chloroplast thylakoid membrane. In terms of biological role, participates in electron transfer between P700 and the cytochrome b6-f complex in photosystem I. The protein is Plastocyanin, chloroplastic (PETE) of Oryza sativa subsp. indica (Rice).